The following is a 201-amino-acid chain: MICOS complex subunit MIC27 (201 aa).

A mitochondrion-targeting transit peptide spans 1 to 31 (MTQDKPIVETISNAGEQVTNVFGQFWQLVTS). Residues 32–117 (KNTTNNGDSK…KCNAYLTEEW (86 aa)) are Cytoplasmic-facing. The helical transmembrane segment at 118 to 138 (TALPKAAAITVGGMAGFVLGL) threads the bilayer. The Mitochondrial intermembrane portion of the chain corresponds to 139–145 (KRGPVGR). The helical transmembrane segment at 146–166 (LLTTTIGLATMAAFCYPIEAV) threads the bilayer. At 167–201 (DVAKTGRAHAEQTWYSFQESPTPSAIVKTNLSPPK) the chain is on the cytoplasmic side.

It belongs to the apolipoprotein O/MICOS complex subunit Mic27 family. Component of the mitochondrial contact site and cristae organizing system (MICOS) complex.

It is found in the mitochondrion outer membrane. In terms of biological role, sustains mitochondrial morphology probably through maintaining cristae morphology. May act as a component of the MICOS complex, a large protein complex of the mitochondria. The polypeptide is MICOS complex subunit MIC27 (Caenorhabditis elegans).